Consider the following 156-residue polypeptide: MNINATLLGQAISFALFVWFCMKYVWPPLMQAIEERQKKIADGLQAAERAAKDLDLAQANASDQLKEAKRTATEIIEQANKRKSQIIDEAREEAQAERQKILAQAEAELEAERNRARDELRKQVATLAVAGAEKILERTIDKDAQKDILDNITAKL.

A helical membrane pass occupies residues 7–29 (LLGQAISFALFVWFCMKYVWPPL).

The protein belongs to the ATPase B chain family. As to quaternary structure, F-type ATPases have 2 components, F(1) - the catalytic core - and F(0) - the membrane proton channel. F(1) has five subunits: alpha(3), beta(3), gamma(1), delta(1), epsilon(1). F(0) has three main subunits: a(1), b(2) and c(10-14). The alpha and beta chains form an alternating ring which encloses part of the gamma chain. F(1) is attached to F(0) by a central stalk formed by the gamma and epsilon chains, while a peripheral stalk is formed by the delta and b chains.

Its subcellular location is the cell inner membrane. Functionally, f(1)F(0) ATP synthase produces ATP from ADP in the presence of a proton or sodium gradient. F-type ATPases consist of two structural domains, F(1) containing the extramembraneous catalytic core and F(0) containing the membrane proton channel, linked together by a central stalk and a peripheral stalk. During catalysis, ATP synthesis in the catalytic domain of F(1) is coupled via a rotary mechanism of the central stalk subunits to proton translocation. In terms of biological role, component of the F(0) channel, it forms part of the peripheral stalk, linking F(1) to F(0). The protein is ATP synthase subunit b of Vibrio parahaemolyticus serotype O3:K6 (strain RIMD 2210633).